Here is a 269-residue protein sequence, read N- to C-terminus: Hydroxyacylglutathione hydrolase (269 aa).

Zn(2+) contacts are provided by His56, His58, Asp60, His61, His115, Asp137, and His177.

Belongs to the metallo-beta-lactamase superfamily. Glyoxalase II family. Monomer. Zn(2+) is required as a cofactor.

The enzyme catalyses an S-(2-hydroxyacyl)glutathione + H2O = a 2-hydroxy carboxylate + glutathione + H(+). The protein operates within secondary metabolite metabolism; methylglyoxal degradation; (R)-lactate from methylglyoxal: step 2/2. Thiolesterase that catalyzes the hydrolysis of S-D-lactoyl-glutathione to form glutathione and D-lactic acid. The chain is Hydroxyacylglutathione hydrolase from Leptospira borgpetersenii serovar Hardjo-bovis (strain JB197).